A 274-amino-acid polypeptide reads, in one-letter code: Large ribosomal subunit protein uL2 (274 aa).

Positions 214-274 (LGRRPRTRPV…NKYIVERRKK (61 aa)) are disordered.

The protein belongs to the universal ribosomal protein uL2 family. As to quaternary structure, part of the 50S ribosomal subunit. Forms a bridge to the 30S subunit in the 70S ribosome.

One of the primary rRNA binding proteins. Required for association of the 30S and 50S subunits to form the 70S ribosome, for tRNA binding and peptide bond formation. It has been suggested to have peptidyltransferase activity; this is somewhat controversial. Makes several contacts with the 16S rRNA in the 70S ribosome. This is Large ribosomal subunit protein uL2 from Flavobacterium johnsoniae (strain ATCC 17061 / DSM 2064 / JCM 8514 / BCRC 14874 / CCUG 350202 / NBRC 14942 / NCIMB 11054 / UW101) (Cytophaga johnsonae).